The primary structure comprises 282 residues: Pantothenate synthetase (282 aa).

30-37 serves as a coordination point for ATP; it reads MGYLHEGH. The active-site Proton donor is His-37. Gln-61 contacts (R)-pantoate. Gln-61 is a beta-alanine binding site. 147–150 lines the ATP pocket; sequence GQKD. A (R)-pantoate-binding site is contributed by Gln-153. Residues Val-176 and 184–187 each bind ATP; that span reads MSSR.

This sequence belongs to the pantothenate synthetase family. As to quaternary structure, homodimer.

It is found in the cytoplasm. The catalysed reaction is (R)-pantoate + beta-alanine + ATP = (R)-pantothenate + AMP + diphosphate + H(+). It functions in the pathway cofactor biosynthesis; (R)-pantothenate biosynthesis; (R)-pantothenate from (R)-pantoate and beta-alanine: step 1/1. Functionally, catalyzes the condensation of pantoate with beta-alanine in an ATP-dependent reaction via a pantoyl-adenylate intermediate. This Pelotomaculum thermopropionicum (strain DSM 13744 / JCM 10971 / SI) protein is Pantothenate synthetase.